Reading from the N-terminus, the 378-residue chain is Dual-specificity RNA methyltransferase RlmN (378 aa).

Catalysis depends on E96, which acts as the Proton acceptor. Residues 102 to 342 (QGGRGTLCVS…VRTTRGDDID (241 aa)) enclose the Radical SAM core domain. A disulfide bond links C109 and C345. Positions 116, 120, and 123 each coordinate [4Fe-4S] cluster. Residues 170–171 (GE), S202, 224–226 (SLH), and N302 contribute to the S-adenosyl-L-methionine site. The active-site S-methylcysteine intermediate is the C345.

The protein belongs to the radical SAM superfamily. RlmN family. It depends on [4Fe-4S] cluster as a cofactor.

The protein resides in the cytoplasm. It catalyses the reaction adenosine(2503) in 23S rRNA + 2 reduced [2Fe-2S]-[ferredoxin] + 2 S-adenosyl-L-methionine = 2-methyladenosine(2503) in 23S rRNA + 5'-deoxyadenosine + L-methionine + 2 oxidized [2Fe-2S]-[ferredoxin] + S-adenosyl-L-homocysteine. The enzyme catalyses adenosine(37) in tRNA + 2 reduced [2Fe-2S]-[ferredoxin] + 2 S-adenosyl-L-methionine = 2-methyladenosine(37) in tRNA + 5'-deoxyadenosine + L-methionine + 2 oxidized [2Fe-2S]-[ferredoxin] + S-adenosyl-L-homocysteine. Functionally, specifically methylates position 2 of adenine 2503 in 23S rRNA and position 2 of adenine 37 in tRNAs. m2A2503 modification seems to play a crucial role in the proofreading step occurring at the peptidyl transferase center and thus would serve to optimize ribosomal fidelity. The chain is Dual-specificity RNA methyltransferase RlmN from Pseudomonas paraeruginosa (strain DSM 24068 / PA7) (Pseudomonas aeruginosa (strain PA7)).